The primary structure comprises 255 residues: Hydroxyacylglutathione hydrolase (255 aa).

Histidine 55, histidine 57, aspartate 59, histidine 60, histidine 113, aspartate 132, and histidine 170 together coordinate Zn(2+).

This sequence belongs to the metallo-beta-lactamase superfamily. Glyoxalase II family. As to quaternary structure, monomer. The cofactor is Zn(2+).

It catalyses the reaction an S-(2-hydroxyacyl)glutathione + H2O = a 2-hydroxy carboxylate + glutathione + H(+). It participates in secondary metabolite metabolism; methylglyoxal degradation; (R)-lactate from methylglyoxal: step 2/2. Functionally, thiolesterase that catalyzes the hydrolysis of S-D-lactoyl-glutathione to form glutathione and D-lactic acid. This is Hydroxyacylglutathione hydrolase from Methylobacterium nodulans (strain LMG 21967 / CNCM I-2342 / ORS 2060).